The primary structure comprises 96 residues: uncharacterized protein (96 aa).

Transmembrane regions (helical) follow at residues 27-47 (LYTV…FFFF) and 52-72 (MSAG…RPTI).

Its subcellular location is the cell membrane. This is an uncharacterized protein from Bacillus subtilis (strain 168).